We begin with the raw amino-acid sequence, 97 residues long: Large ribosomal subunit protein bL28 (97 aa).

It belongs to the bacterial ribosomal protein bL28 family.

The polypeptide is Large ribosomal subunit protein bL28 (Rickettsia typhi (strain ATCC VR-144 / Wilmington)).